A 284-amino-acid polypeptide reads, in one-letter code: Tropomyosin (284 aa).

The stretch at methionine 1 to glutamate 273 forms a coiled coil. Basic and acidic residues predominate over residues serine 110–leucine 130. Positions serine 110–asparagine 134 are disordered.

Belongs to the tropomyosin family. In terms of assembly, homodimer.

Tropomyosin, in association with the troponin complex, plays a central role in the calcium dependent regulation of muscle contraction. This is Tropomyosin from Perna viridis (Asian green mussel).